A 159-amino-acid polypeptide reads, in one-letter code: Large ribosomal subunit protein uL30 (159 aa).

This sequence belongs to the universal ribosomal protein uL30 family. As to quaternary structure, part of the 50S ribosomal subunit.

In Ignicoccus hospitalis (strain KIN4/I / DSM 18386 / JCM 14125), this protein is Large ribosomal subunit protein uL30.